A 351-amino-acid polypeptide reads, in one-letter code: S-adenosylmethionine:tRNA ribosyltransferase-isomerase (351 aa).

Belongs to the QueA family. Monomer.

The protein resides in the cytoplasm. It carries out the reaction 7-aminomethyl-7-carbaguanosine(34) in tRNA + S-adenosyl-L-methionine = epoxyqueuosine(34) in tRNA + adenine + L-methionine + 2 H(+). It functions in the pathway tRNA modification; tRNA-queuosine biosynthesis. Its function is as follows. Transfers and isomerizes the ribose moiety from AdoMet to the 7-aminomethyl group of 7-deazaguanine (preQ1-tRNA) to give epoxyqueuosine (oQ-tRNA). This chain is S-adenosylmethionine:tRNA ribosyltransferase-isomerase, found in Hydrogenovibrio crunogenus (strain DSM 25203 / XCL-2) (Thiomicrospira crunogena).